A 375-amino-acid chain; its full sequence is Cell division protein ZapE (375 aa).

78–85 (GGVGRGKT) is an ATP binding site.

This sequence belongs to the AFG1 ATPase family. ZapE subfamily. In terms of assembly, interacts with FtsZ.

It localises to the cytoplasm. Functionally, reduces the stability of FtsZ polymers in the presence of ATP. In Escherichia coli O157:H7, this protein is Cell division protein ZapE.